A 1411-amino-acid chain; its full sequence is DNA-directed RNA polymerase subunit beta' (1411 aa).

Zn(2+) contacts are provided by cysteine 70, cysteine 72, cysteine 85, and cysteine 88. The Mg(2+) site is built by aspartate 458, aspartate 460, and aspartate 462. The Zn(2+) site is built by cysteine 813, cysteine 887, cysteine 894, and cysteine 897. Residues 1384–1411 (AEAAEMATTGSDEAPEVEGSGVESGSAE) are disordered.

Belongs to the RNA polymerase beta' chain family. In terms of assembly, the RNAP catalytic core consists of 2 alpha, 1 beta, 1 beta' and 1 omega subunit. When a sigma factor is associated with the core the holoenzyme is formed, which can initiate transcription. It depends on Mg(2+) as a cofactor. Zn(2+) is required as a cofactor.

The catalysed reaction is RNA(n) + a ribonucleoside 5'-triphosphate = RNA(n+1) + diphosphate. Functionally, DNA-dependent RNA polymerase catalyzes the transcription of DNA into RNA using the four ribonucleoside triphosphates as substrates. This is DNA-directed RNA polymerase subunit beta' from Paracidovorax citrulli (strain AAC00-1) (Acidovorax citrulli).